Consider the following 348-residue polypeptide: Mannonate dehydratase (348 aa).

This sequence belongs to the mannonate dehydratase family. Requires Fe(2+) as cofactor. The cofactor is Mn(2+).

The enzyme catalyses D-mannonate = 2-dehydro-3-deoxy-D-gluconate + H2O. Its pathway is carbohydrate metabolism; pentose and glucuronate interconversion. In terms of biological role, catalyzes the dehydration of D-mannonate. This chain is Mannonate dehydratase, found in Streptococcus agalactiae serotype Ia (strain ATCC 27591 / A909 / CDC SS700).